Here is a 1377-residue protein sequence, read N- to C-terminus: DNA-directed RNA polymerase subunit beta (1377 aa).

The protein belongs to the RNA polymerase beta chain family. The RNAP catalytic core consists of 2 alpha, 1 beta, 1 beta' and 1 omega subunit. When a sigma factor is associated with the core the holoenzyme is formed, which can initiate transcription.

It catalyses the reaction RNA(n) + a ribonucleoside 5'-triphosphate = RNA(n+1) + diphosphate. Functionally, DNA-dependent RNA polymerase catalyzes the transcription of DNA into RNA using the four ribonucleoside triphosphates as substrates. In Cereibacter sphaeroides (strain ATCC 17029 / ATH 2.4.9) (Rhodobacter sphaeroides), this protein is DNA-directed RNA polymerase subunit beta.